We begin with the raw amino-acid sequence, 195 residues long: Peptidyl-tRNA hydrolase (195 aa).

Tyr-17 provides a ligand contact to tRNA. Catalysis depends on His-22, which acts as the Proton acceptor. Residues Tyr-68, Asn-70, and Asn-116 each coordinate tRNA.

Belongs to the PTH family. As to quaternary structure, monomer.

It localises to the cytoplasm. It carries out the reaction an N-acyl-L-alpha-aminoacyl-tRNA + H2O = an N-acyl-L-amino acid + a tRNA + H(+). Hydrolyzes ribosome-free peptidyl-tRNAs (with 1 or more amino acids incorporated), which drop off the ribosome during protein synthesis, or as a result of ribosome stalling. Its function is as follows. Catalyzes the release of premature peptidyl moieties from peptidyl-tRNA molecules trapped in stalled 50S ribosomal subunits, and thus maintains levels of free tRNAs and 50S ribosomes. This is Peptidyl-tRNA hydrolase from Shewanella sp. (strain ANA-3).